We begin with the raw amino-acid sequence, 356 residues long: Protein HEXIM1 (356 aa).

Basic and acidic residues-rich tracts occupy residues 1–11 and 24–47; these read MAEPLLTEHQH and VHEE…DSRW. Positions 1–162 are disordered; sequence MAEPLLTEHQ…RPSKKKRHWK (162 aa). The span at 48 to 58 shows a compositional bias: polar residues; that stretch reads QSRASLQSGSR. The span at 84 to 93 shows a compositional bias: basic and acidic residues; sequence SLEKGEKGQN. 2 positions are modified to phosphoserine: Ser-98 and Ser-103. The span at 145-162 shows a compositional bias: basic residues; that stretch reads LGKKKHRRRPSKKKRHWK. A basic region; mediates nuclear localization and interaction with 7SK snRNA and NR3C1 region spans residues 147–174; it reads KKKHRRRPSKKKRHWKPYYKLTWEEKKK. Residues 199–202 form an interaction with P-TEFb region; that stretch reads PYNT. Residues 207–247 are autoinhibitory acidic region; in absence of 7SK snRNA interacts with the basic region preventing interaction with P-TEFb and modulating subcellular localization; that stretch reads MDDHDQEEPDLKTGLYPKRAAAKSDDTSDEDFVEEAGEEDG. The interval 210-259 is disordered; that stretch reads HDQEEPDLKTGLYPKRAAAKSDDTSDEDFVEEAGEEDGGSDGMGGDGSEF. At Ser-230 the chain carries Phosphoserine. Position 233 is a phosphothreonine (Thr-233). Over residues 233 to 248 the composition is skewed to acidic residues; it reads TSDEDFVEEAGEEDGG. Phosphoserine is present on residues Ser-234, Ser-249, and Ser-257. Residues 280–346 are a coiled coil; that stretch reads SKQELIKEYL…LTENELHRQQ (67 aa). The mediates interaction with CCNT1 stretch occupies residues 283–311; that stretch reads ELIKEYLELEKCLSRKEDENNRLRLESKR. A required for inhibition of ESR1-dependent transcription region spans residues 307–352; sequence LESKRLGGVDARVRELELELDRLRAENLQLLTENELHRQQERAPLS.

It belongs to the HEXIM family. As to quaternary structure, homooligomer and heterooligomer with HEXIM2; probably dimeric. Core component of the 7SK RNP complex, at least composed of 7SK RNA, LARP7, MEPCE, HEXIM1 (or HEXIM2) and P-TEFb (composed of CDK9 and CCNT1/cyclin-T1). Interacts with the N-CoR complex through NCOR1. Interacts with ESR1 and NR3C1. May interact with NF-kappa-B through RELA. Interacts with CCNT2; mediates formation of a tripartite complex with KPNA2. Part of the HDP-RNP complex composed of at least HEXIM1, PRKDC, XRCC5, XRCC6, paraspeckle proteins (SFPQ, NONO, PSPC1, RBM14, and MATR3) and NEAT1 non-coding RNA. In terms of tissue distribution, widely expressed with higher expression in heart, skeletal muscle and brain (at protein level).

The protein localises to the nucleus. It localises to the cytoplasm. Functionally, transcriptional regulator which functions as a general RNA polymerase II transcription inhibitor. Core component of the 7SK RNP complex: in cooperation with 7SK snRNA sequesters P-TEFb in a large inactive 7SK snRNP complex preventing RNA polymerase II phosphorylation and subsequent transcriptional elongation. May also regulate NF-kappa-B, ESR1, NR3C1 and CIITA-dependent transcriptional activity. Plays a role in the regulation of DNA virus-mediated innate immune response by assembling into the HDP-RNP complex, a complex that serves as a platform for IRF3 phosphorylation and subsequent innate immune response activation through the cGAS-STING pathway. The sequence is that of Protein HEXIM1 (Hexim1) from Mus musculus (Mouse).